Here is a 214-residue protein sequence, read N- to C-terminus: ATP phosphoribosyltransferase (214 aa).

This sequence belongs to the ATP phosphoribosyltransferase family. Short subfamily. In terms of assembly, heteromultimer composed of HisG and HisZ subunits.

The protein resides in the cytoplasm. It catalyses the reaction 1-(5-phospho-beta-D-ribosyl)-ATP + diphosphate = 5-phospho-alpha-D-ribose 1-diphosphate + ATP. The protein operates within amino-acid biosynthesis; L-histidine biosynthesis; L-histidine from 5-phospho-alpha-D-ribose 1-diphosphate: step 1/9. Catalyzes the condensation of ATP and 5-phosphoribose 1-diphosphate to form N'-(5'-phosphoribosyl)-ATP (PR-ATP). Has a crucial role in the pathway because the rate of histidine biosynthesis seems to be controlled primarily by regulation of HisG enzymatic activity. The protein is ATP phosphoribosyltransferase of Methylibium petroleiphilum (strain ATCC BAA-1232 / LMG 22953 / PM1).